The primary structure comprises 593 residues: Chromodomain Y-like protein (593 aa).

Positions 1-14 are enriched in polar residues; sequence MGIGNSQPNSQEAQ. The disordered stretch occupies residues 1 to 30; that stretch reads MGIGNSQPNSQEAQLCTLPEKAEQPTDDNT. The region spanning 56-116 is the Chromo domain; sequence TQVESIVDKR…RHNERQKEGS (61 aa). Positions 56–304 are interaction with EZH2; it reads TQVESIVDKR…TIQTSVTGVT (249 aa). The residue at position 83 (serine 83) is a Phosphoserine. The disordered stretch occupies residues 110-158; the sequence is ERQKEGSLARASRASPSNARKQISRSTHSTLSKTNSKALVVGKDHESKS. The segment covering 117–129 has biased composition (low complexity); sequence LARASRASPSNAR. N6,N6,N6-trimethyllysine; by EHMT2; alternate is present on lysine 130. Residue lysine 130 is modified to N6,N6-dimethyllysine; by EHMT2; alternate. An N6-methyllysine; by EHMT2; alternate modification is found at lysine 130. Residues 133 to 146 show a composition bias toward polar residues; it reads SRSTHSTLSKTNSK. Phosphoserine is present on residues serine 165, serine 196, and serine 211. The disordered stretch occupies residues 200 to 223; the sequence is GRTSVDGFQGESPEKLDPVDQGAE. An acetyl-CoA-binding domain region spans residues 357–589; that stretch reads SENNSLNPEV…DSMLKYLQRK (233 aa).

Forms multimers and multimerization is required for stable binding to chromatin. Interacts with HDAC1 and HDAC2 via its C-terminal acetyl-CoA-binding domain. Interacts with EZH2, EED, SUZ12, REST, EHMT1 and EHMT2. Part of a complex containing at least CDYL, REST, WIZ, SETB1, EHMT1 and EHMT2. Part of a complex containing at least CDYL, MIER1, MIER2, HDAC1 and HDAC2. Interacts with CHAF1A and CHAF1B; bridging the CAF-1 complex to the MCM2-7 (MCM) complex. Interacts with MCM3 and MCM5; bridging the CAF-1 complex to the MCM2-7 (MCM) complex. Interacts with EHMT2 and PRDM9; interaction only takes place when PRDM9 is bound to hotspot DNA. As to expression, highly expressed in testis (at protein level). Expressed in the hippocampus (at protein level). Expressed in the medial prefrontal cortex, prelimbic cortex, intralimbic cortex and cingulate cortex area (at protein level). Isoform 1: Expressed as 2 transcripts encoding the same protein, a ubiquitous transcript and a highly expressed testis-specific transcript.

It localises to the nucleus. Its subcellular location is the chromosome. The catalysed reaction is L-lysyl-[protein] + acetyl-CoA = N(6)-acetyl-L-lysyl-[protein] + CoA + H(+). It catalyses the reaction 3-hydroxybutanoyl-CoA = (2E)-butenoyl-CoA + H2O. Functionally, chromatin reader protein that recognizes and binds histone H3 trimethylated at 'Lys-9', dimethylated at 'Lys-27' and trimethylated at 'Lys-27' (H3K9me3, H3K27me2 and H3K27me3, respectively). Part of multimeric repressive chromatin complexes, where it is required for transmission and restoration of repressive histone marks, thereby preserving the epigenetic landscape. Required for chromatin targeting and maximal enzymatic activity of Polycomb repressive complex 2 (PRC2); acts as a positive regulator of PRC2 activity by bridging the pre-existing histone H3K27me3 and newly recruited PRC2 on neighboring nucleosomes. Acts as a corepressor for REST by facilitating histone-lysine N-methyltransferase EHMT2 recruitment and H3K9 dimethylation at REST target genes for repression. Involved in X chromosome inactivation in females: recruited to Xist RNA-coated X chromosome and facilitates propagation of H3K9me2 by anchoring EHMT2. Promotes EZH2 accumulation and H3K27me3 methylation at DNA double strand breaks (DSBs), thereby facilitating transcriptional repression at sites of DNA damage and homology-directed repair of DSBs. Required for neuronal migration during brain development by repressing expression of RHOA. By repressing the expression of SCN8A, contributes to the inhibition of intrinsic neuronal excitability and epileptogenesis. In addition to acting as a chromatin reader, acts as a hydro-lyase. Shows crotonyl-coA hydratase activity by mediating the conversion of crotonyl-CoA ((2E)-butenoyl-CoA) to beta-hydroxybutyryl-CoA (3-hydroxybutanoyl-CoA), thereby acting as a negative regulator of histone crotonylation. Histone crotonylation is required during spermatogenesis; down-regulation of histone crotonylation by CDYL regulates the reactivation of sex chromosome-linked genes in round spermatids and histone replacement in elongating spermatids. By regulating histone crotonylation and trimethylation of H3K27, may be involved in stress-induced depression-like behaviors, possibly by regulating VGF expression. May have histone acetyltransferase activity; such activity is however unsure in vivo. In terms of biological role, not able to recognize and bind histone H3K9me3, histone H3K27me2 and histone H3K27me3, due to the presence of a N-terminal extension that inactivates the chromo domain. The protein is Chromodomain Y-like protein of Mus musculus (Mouse).